The following is a 22-amino-acid chain: Motilin (22 aa).

The tract at residues phenylalanine 1–glutamine 22 is disordered. A compositionally biased stretch (basic and acidic residues) spans glutamate 9–glutamine 22.

Belongs to the motilin family.

It is found in the secreted. In terms of biological role, plays an important role in the regulation of interdigestive gastrointestinal motility and indirectly causes rhythmic contraction of duodenal and colonic smooth muscle. In Canis lupus familiaris (Dog), this protein is Motilin (MLN).